The chain runs to 686 residues: Phosphatidylinositol 4,5-bisphosphate-binding protein SLM1 (686 aa).

The segment at 33 to 147 (RSMTSADHAN…KQLQGKNSLT (115 aa)) is disordered. Residues 45–63 (QQQQQQQQQQQQQQQQQQQ) show a composition bias toward low complexity. The segment covering 64–126 (SASFQNGSLT…PNIDSNTNVT (63 aa)) has biased composition (polar residues). The span at 133–144 (NNNNGKQLQGKN) shows a compositional bias: low complexity. Phosphoserine occurs at positions 145, 150, and 153. Low complexity predominate over residues 157-172 (SSLQRQRLAQQQQQQQ). Positions 157–176 (SSLQRQRLAQQQQQQQDPRS) are disordered. Residues 296–381 (RLEDLRRDLI…FLHEAFDNLE (86 aa)) adopt a coiled-coil conformation. The PH domain maps to 468 to 581 (YEIKSGFLER…WFDNLKILTS (114 aa)). The interval 626–669 (VENDENDDINSNYVGSTVTPKLDNQTNTNTSMSSLPDTNDSELQ) is disordered. The span at 634–663 (INSNYVGSTVTPKLDNQTNTNTSMSSLPDT) shows a compositional bias: polar residues. Residues 673–678 (PNIYIQ) carry the PXIXIT-like, required for interaction with CNA1 and CNA2, and calcineurin-dependent dephosphorylation motif.

Heterodimer of SLM1-SLM2. Binds phosphatidylinositol 4,5-bisphosphate, which is required for function. Interacts with the TORC2 subunits AVO2, BIT61 and TOR2. Interacts with the calcineurin catalytic subunits CNA1 and CNA2. Phosphorylated by the target of rapamycin complex 2 (TORC2) and dephosphorylated by serine/threonine-protein phosphatase 2B (calcineurin). Dephosphorylated in response to the disruption or inhibition of sphingolipid synthesis.

Its subcellular location is the cell membrane. In terms of biological role, together with SLM2, acts as an effector of the TORC2- and calcineurin-signaling pathways. Phosphorylated and activated by TORC2 under favorable growth conditions. Mediates actin polarization via inhibition of calcineurin-dependent transcription. Upon nutrient limitation or environmental stress, gets dephosphorylated by calcineurin. Dephosphorylation inhibits its interaction with TORC2, thereby antagonizing TORC2 signaling and mediating calcineurin-dependent actin depolarization. May play a role in the response to the disruption of sphingolipid synthesis, where dephosphorylation of SLM1 leads to the activation and phosphorylation of YPK1 through the TORC2 and PKH1 pathways, which in turn phosphorylates ORM1 and LAG1 to activate sphingolipid synthesis. Also functions in heat-induced, calcineurin-mediated uracil permease (FUR4) endocytosis. This is Phosphatidylinositol 4,5-bisphosphate-binding protein SLM1 (SLM1) from Saccharomyces cerevisiae (strain ATCC 204508 / S288c) (Baker's yeast).